The sequence spans 171 residues: uncharacterized protein (171 aa).

In terms of domain architecture, PfpI endopeptidase spans 3-171 (KKVAIILANE…FNREIVKQLQ (169 aa)).

The protein belongs to the peptidase C56 family.

This is an uncharacterized protein from Staphylococcus aureus (strain MRSA252).